Reading from the N-terminus, the 301-residue chain is Phosphate butyryltransferase (301 aa).

This sequence belongs to the phosphate acetyltransferase and butyryltransferase family.

It catalyses the reaction butanoyl-CoA + phosphate = butanoyl phosphate + CoA. It functions in the pathway lipid metabolism; butanoate metabolism. Functionally, catalyzes the conversion of butyryl-CoA through butyryl phosphate to butyrate. The polypeptide is Phosphate butyryltransferase (ptb) (Clostridium acetobutylicum (strain ATCC 824 / DSM 792 / JCM 1419 / IAM 19013 / LMG 5710 / NBRC 13948 / NRRL B-527 / VKM B-1787 / 2291 / W)).